A 549-amino-acid chain; its full sequence is Dicarboxylate transporter 2.2, chloroplastic (549 aa).

Residues 1–54 (MESLALRSISLSASYLSLHRSSSKSFALLPPSISVHTSPTLRSLSISSPRFTLR) constitute a chloroplast transit peptide. The tract at residues 57–79 (ASSLPEEQNKPQPPPPSPPQPQG) is disordered. Residues 67-77 (PQPPPPSPPQP) show a composition bias toward pro residues. A run of 12 helical transmembrane segments spans residues 79–99 (GAKL…RFLI), 115–135 (IFLF…AWAF), 151–171 (TAFA…FFFA), 220–240 (AGGV…SYPG), 247–267 (LGSF…AILL), 294–314 (WFKV…LIIY), 344–364 (NEWI…FGEA), 365–385 (IGIA…LLGV), 403–423 (WFAV…VAWM), 436–456 (LTWP…HYLF), 470–490 (FLAM…CLAF), and 523–543 (VGFV…SFWW).

This sequence belongs to the SLC13A/DASS transporter (TC 2.A.47) family. DIT1 subfamily. As to expression, expressed in roots, rosette and cauline leaves, stems, flowers and siliques.

The protein resides in the plastid. Its subcellular location is the chloroplast inner membrane. Functionally, may be involved in the transport of dicarboxylate compounds. This Arabidopsis thaliana (Mouse-ear cress) protein is Dicarboxylate transporter 2.2, chloroplastic (DIT2-2).